A 95-amino-acid polypeptide reads, in one-letter code: DNA-binding protein CENSYa_1764 (95 aa).

A disordered region spans residues 1 to 21 (MSYTDPDDSLPEHVPGEAEMS).

It belongs to the PDCD5 family.

The sequence is that of DNA-binding protein CENSYa_1764 from Cenarchaeum symbiosum (strain A).